Here is a 283-residue protein sequence, read N- to C-terminus: Orotidine 5'-phosphate decarboxylase (283 aa).

Residues Asp40, 62-64 (KTH), 93-102 (DRKFADIGNT), Tyr220, and Arg239 each bind substrate. Residue Lys95 is the Proton donor of the active site.

Belongs to the OMP decarboxylase family.

The enzyme catalyses orotidine 5'-phosphate + H(+) = UMP + CO2. The protein operates within pyrimidine metabolism; UMP biosynthesis via de novo pathway; UMP from orotate: step 2/2. This Mycosarcoma maydis (Corn smut fungus) protein is Orotidine 5'-phosphate decarboxylase (PYR6).